The sequence spans 201 residues: Adenylyl-sulfate kinase (201 aa).

An ATP-binding site is contributed by 35-42 (GLSGSGKS). The Phosphoserine intermediate role is filled by S109.

This sequence belongs to the APS kinase family.

It carries out the reaction adenosine 5'-phosphosulfate + ATP = 3'-phosphoadenylyl sulfate + ADP + H(+). Its pathway is sulfur metabolism; hydrogen sulfide biosynthesis; sulfite from sulfate: step 2/3. Catalyzes the synthesis of activated sulfate. The chain is Adenylyl-sulfate kinase from Salmonella arizonae (strain ATCC BAA-731 / CDC346-86 / RSK2980).